Reading from the N-terminus, the 546-residue chain is Thermosome subunit beta (546 aa).

Belongs to the TCP-1 chaperonin family. Forms a Heterooligomeric complex of two stacked eight-membered rings.

Its function is as follows. Molecular chaperone; binds unfolded polypeptides in vitro, and has a weak ATPase activity. The protein is Thermosome subunit beta (thsB) of Thermococcus kodakarensis (strain ATCC BAA-918 / JCM 12380 / KOD1) (Pyrococcus kodakaraensis (strain KOD1)).